A 541-amino-acid chain; its full sequence is Arginine--tRNA ligase (541 aa).

Positions 123-133 (ANPTGFLHIGH) match the 'HIGH' region motif.

This sequence belongs to the class-I aminoacyl-tRNA synthetase family. Monomer.

It is found in the cytoplasm. It carries out the reaction tRNA(Arg) + L-arginine + ATP = L-arginyl-tRNA(Arg) + AMP + diphosphate. This chain is Arginine--tRNA ligase, found in Metamycoplasma arthritidis (strain 158L3-1) (Mycoplasma arthritidis).